We begin with the raw amino-acid sequence, 666 residues long: Calpain-10 (666 aa).

Positions 13 to 321 constitute a Calpain catalytic domain; it reads LFRDAAFPAS…FDEVTIGYPV (309 aa). Catalysis depends on residues Cys-73, His-238, and Asn-263. 2 domain III regions span residues 322 to 488 and 507 to 648; these read TEAG…ISLS and EWET…IHSQ.

The protein belongs to the peptidase C2 family. As to expression, ubiquitous.

The protein resides in the cytoplasm. It localises to the nucleus. Its function is as follows. Calcium-regulated non-lysosomal thiol-protease which catalyzes limited proteolysis of substrates involved in cytoskeletal remodeling and signal transduction. May play a role in insulin-stimulated glucose uptake. The polypeptide is Calpain-10 (Capn10) (Rattus norvegicus (Rat)).